A 119-amino-acid chain; its full sequence is Large ribosomal subunit protein bL20 (119 aa).

This sequence belongs to the bacterial ribosomal protein bL20 family.

Its function is as follows. Binds directly to 23S ribosomal RNA and is necessary for the in vitro assembly process of the 50S ribosomal subunit. It is not involved in the protein synthesizing functions of that subunit. The protein is Large ribosomal subunit protein bL20 of Herminiimonas arsenicoxydans.